The primary structure comprises 369 residues: Aminomethyltransferase (369 aa).

It belongs to the GcvT family. As to quaternary structure, the glycine cleavage system is composed of four proteins: P, T, L and H.

The catalysed reaction is N(6)-[(R)-S(8)-aminomethyldihydrolipoyl]-L-lysyl-[protein] + (6S)-5,6,7,8-tetrahydrofolate = N(6)-[(R)-dihydrolipoyl]-L-lysyl-[protein] + (6R)-5,10-methylene-5,6,7,8-tetrahydrofolate + NH4(+). The glycine cleavage system catalyzes the degradation of glycine. This chain is Aminomethyltransferase, found in Rippkaea orientalis (strain PCC 8801 / RF-1) (Cyanothece sp. (strain PCC 8801)).